The chain runs to 268 residues: Speedy protein E4A (268 aa).

Disordered regions lie at residues 1–26 (MGEGTPGVDSARVQEEGGRDQSLGFV) and 43–97 (LCSE…LDSE). Positions 43-52 (LCSEEQSPQP) are enriched in polar residues. The tract at residues 134–265 (PEHHKVFTKL…DLWVWARDRT (132 aa)) is speedy/Ringo box; Required for CDK-binding.

The protein belongs to the Speedy/Ringo family. In terms of assembly, interacts with CDK1. Does not interact with CDK2 in vivo. As to expression, testis-specific.

The protein localises to the nucleus. Promotes progression through the cell cycle via binding and activation of CDK1. In Mus musculus (Mouse), this protein is Speedy protein E4A.